An 863-amino-acid polypeptide reads, in one-letter code: Bifunctional uridylyltransferase/uridylyl-removing enzyme (863 aa).

Residues 1–328 (MLFSPTLSSP…PSNQDTVIDQ (328 aa)) are uridylyltransferase. Residues 329 to 687 (LDDDFQLINQ…ISNRFSLGGT (359 aa)) are uridylyl-removing. An HD domain is found at 446–568 (VDEHTLRVML…VQNQVRLDYL (123 aa)). ACT domains are found at residues 688–772 (EVFI…PNRQ) and 794–863 (QMEL…RNIG).

It belongs to the GlnD family. Mg(2+) serves as cofactor.

The catalysed reaction is [protein-PII]-L-tyrosine + UTP = [protein-PII]-uridylyl-L-tyrosine + diphosphate. It catalyses the reaction [protein-PII]-uridylyl-L-tyrosine + H2O = [protein-PII]-L-tyrosine + UMP + H(+). With respect to regulation, uridylyltransferase (UTase) activity is inhibited by glutamine, while glutamine activates uridylyl-removing (UR) activity. Its function is as follows. Modifies, by uridylylation and deuridylylation, the PII regulatory proteins (GlnB and homologs), in response to the nitrogen status of the cell that GlnD senses through the glutamine level. Under low glutamine levels, catalyzes the conversion of the PII proteins and UTP to PII-UMP and PPi, while under higher glutamine levels, GlnD hydrolyzes PII-UMP to PII and UMP (deuridylylation). Thus, controls uridylylation state and activity of the PII proteins, and plays an important role in the regulation of nitrogen assimilation and metabolism. In Haemophilus influenzae (strain 86-028NP), this protein is Bifunctional uridylyltransferase/uridylyl-removing enzyme.